Here is an 84-residue protein sequence, read N- to C-terminus: MADDPQEVAEHERIFKRFDANGDGKISSSELGETLKTLGSVTPEEIQRMMAEIDTDGDGFISFEEFTVFARANRGLVKDVAKIF.

2 EF-hand domains span residues 6 to 40 and 41 to 76; these read QEVAEHERIFKRFDANGDGKISSSELGETLKTLGS and VTPEEIQRMMAEIDTDGDGFISFEEFTVFARANRGL. Ca(2+) contacts are provided by Asp19, Asn21, Asp23, Lys25, Glu30, Asp54, Asp56, Asp58, and Glu65.

Expressed exclusively in mature pollen.

Its subcellular location is the endomembrane system. The sequence is that of Polcalcin Ole e 3 (OLE3) from Olea europaea (Common olive).